Reading from the N-terminus, the 264-residue chain is Sexual differentiation protein ste4 (264 aa).

The 63-residue stretch at 11 to 73 folds into the SAM domain; it reads WNNEAVCNWI…LSAIQSMKKQ (63 aa). The leucine-zipper stretch occupies residues 111–139; that stretch reads LEKRVEYLETENTKLVKTLNSLNSEFLQL. The Ras-associating domain occupies 176–264; the sequence is GSFDLEVNDS…PSFVLSRRSC (89 aa).

In terms of assembly, homodimer or heterodimer with another leucine-zipper protein.

Functionally, essential for mating and meiosis. In Schizosaccharomyces pombe (strain 972 / ATCC 24843) (Fission yeast), this protein is Sexual differentiation protein ste4 (ste4).